The chain runs to 80 residues: Exodeoxyribonuclease 7 small subunit (80 aa).

It belongs to the XseB family. In terms of assembly, heterooligomer composed of large and small subunits.

The protein localises to the cytoplasm. The catalysed reaction is Exonucleolytic cleavage in either 5'- to 3'- or 3'- to 5'-direction to yield nucleoside 5'-phosphates.. Its function is as follows. Bidirectionally degrades single-stranded DNA into large acid-insoluble oligonucleotides, which are then degraded further into small acid-soluble oligonucleotides. The chain is Exodeoxyribonuclease 7 small subunit from Escherichia coli (strain SE11).